Here is a 392-residue protein sequence, read N- to C-terminus: Chorismate synthase (392 aa).

Positions 40 and 46 each coordinate NADP(+). Residues 135 to 137 (RAS), 256 to 257 (QA), Gly300, 315 to 319 (KPIAT), and Arg341 each bind FMN.

This sequence belongs to the chorismate synthase family. In terms of assembly, homotetramer. It depends on FMNH2 as a cofactor.

The catalysed reaction is 5-O-(1-carboxyvinyl)-3-phosphoshikimate = chorismate + phosphate. Its pathway is metabolic intermediate biosynthesis; chorismate biosynthesis; chorismate from D-erythrose 4-phosphate and phosphoenolpyruvate: step 7/7. Its function is as follows. Catalyzes the anti-1,4-elimination of the C-3 phosphate and the C-6 proR hydrogen from 5-enolpyruvylshikimate-3-phosphate (EPSP) to yield chorismate, which is the branch point compound that serves as the starting substrate for the three terminal pathways of aromatic amino acid biosynthesis. This reaction introduces a second double bond into the aromatic ring system. The sequence is that of Chorismate synthase from Nocardioides sp. (strain ATCC BAA-499 / JS614).